Consider the following 930-residue polypeptide: F-box only protein 11 (930 aa).

A disordered region spans residues 1–150 (MNSVRAANRR…RVSGKSQDLS (150 aa)). Over residues 7–16 (ANRRPRRVSR) the composition is skewed to basic residues. The segment covering 17-27 (PRPVQQQQQQP) has biased composition (low complexity). Residues 28–73 (PQQPPPQPPQQQPPPQPPQQPPQQQPPPPPQQQPPPPPPPPPPPPQ) are compositionally biased toward pro residues. Residues 117-132 (PTKSSMEGASTSTTEN) are compositionally biased toward polar residues. The region spanning 156–202 (QYLQEKLPDEVVLKIFSYLLEQDLCRAACVCKRFSELANDPILWKRL) is the F-box domain. PbH1 repeat units lie at residues 398 to 420 (GACPTIKHCNISDCENVGLYITD), 421 to 443 (HAQGIYEDNEISNNALAGIWVKN), 444 to 466 (HGNPIIRRNHIHHGRDVGVFTFD), 467 to 489 (HGMGYFESCNIHRNRIAGFEVKA), 490 to 512 (YANPTVVRCEIHHGQTGGIYVHE), 513 to 535 (KGRGQFIENKIYANNFAGVWITS), 536 to 558 (NSDPTIRGNSIFNGNQGGVYIFG), 559 to 581 (DGRGLIEGNDIYGNALAGIQIRT), 582 to 604 (NSCPIVRHNKIHDGQHGGIYVHE), 605 to 627 (KGQGVIEENEVYSNTLAGVWVTT), 628 to 650 (GSTPVLRRNRIHSGKQVGVYFYD), 651 to 673 (NGHGVLEDNDIYNHMYSGVQIRT), 674 to 696 (GSNPKIRRNKIWGGQNGGILVYN), 697 to 719 (SGLGCIEDNEIFDNAMAGVWIKT), 720 to 742 (DSNPTLRRNKIHDGRDGGICIFN), 743 to 765 (GGRGLLEENDIFRNAQAGVLIST), 766 to 788 (NSHPVLRKNRIFDGFAAGIEITN), 789 to 811 (HATATLEGNQIFNNRFGGLFLAS), and 812 to 833 (GVNVTMKDNKIMNNQDAIEKAV). Residues 836–907 (GQCLYKISSY…LSNPCTLAGE (72 aa)) form a UBR-type zinc finger.

As to quaternary structure, component of the SCF(FBXO11) complex consisting of CUL1, RBX1, SKP1 and FBXO11. Interacts with CIITA. As to expression, at 9.5 dpc and 10.5 dpc, expression is restricted to developing heart tissue. By 11.5 dpc and 12.5 dpc, detected in liver and subsequently in muscle by 13.5 dpc. At 14.5 dpc, still detected in heart, liver and muscle and also in the developing secondary palate including the nasal, medial and oral epithelia of the palatal shelves. At 15.5 dpc and 16.5 dpc, expressed in lung, kidney, heart, liver, muscle and adrenal gland. At this time, fusion of the palate shelves has occurred, with expression confined to the nasal and oral epithelia. At 17.5 dpc, expression in the lung is confined to bronchial epithelial cells and is evident in bone marrow, skin, tissue macrophages, osteoblasts, kidney, liver and spleen. At 18.5 dpc, expressed in bone marrow, liver, kidney and muscle but decreases in heart and lung. At this time, first detected in the middle ear epithelium. At the newborn stage, expression is strong in the middle ear where it is confined to mucin-secreting cells, as well as persisting in bone marrow, kidney and liver. Middle ear expression persists in postnatal head tissue at 4 and 13 days after birth and has declined by 21 days after birth. In the adult, expression is seen in alveolar macrophages of the lung, glomeruli and collecting tubules of the kidney, midbrain, heart and muscle.

It is found in the nucleus. The protein resides in the chromosome. The protein operates within protein modification; protein ubiquitination. Substrate recognition component of a SCF (SKP1-CUL1-F-box protein) E3 ubiquitin-protein ligase complex which mediates the ubiquitination and subsequent proteasomal degradation of target proteins, such as DTL/CDT2, BCL6, SNAI1 and PRDM1/BLIMP1. The SCF(FBXO11) complex mediates ubiquitination and degradation of BCL6, thereby playing a role in the germinal center B-cells terminal differentiation toward memory B-cells and plasma cells. The SCF(FBXO11) complex also mediates ubiquitination and degradation of DTL, an important step for the regulation of TGF-beta signaling, cell migration and the timing of the cell-cycle progression and exit. The SCF(FBXO11) complex also catalyzes ubiquitination and degradation of GSK3B-phosphorylated SNAI1. Binds to and neddylates phosphorylated p53/TP53, inhibiting its transcriptional activity. Plays a role in the regulatiom of erythropoiesis but not myelopoiesis or megakaryopoiesis. Mechanistically, activates erythroid genes by mediating the degradation of BAHD1, a heterochromatin-associated protein that recruits corepressors to H3K27me3 marks. Participates in macrophage cell death and inflammation in response to bacterial toxins by regulating the expression of complement 5a receptor 1/C5AR1 and IL-1beta. Acts as a critical regulator to determine the level of MHC-II by mediating the recognition of degron at the P/S/T domain of CIITA leading to its ubiquitination and subsequent degradation via the proteasome. Participates in the antiviral repsonse by initiating the activation of TBK1-IRF3-IFN-I axis. Mediates the 'Lys-63'-linked ubiquitination of TRAF3 to strengthen the interaction between TRAF3 and TBK1. The chain is F-box only protein 11 from Mus musculus (Mouse).